A 302-amino-acid chain; its full sequence is MDDLHGSNARMHIREAQDPMHVQFEHHALHHIHNGSGMVDDQADDGNAGGMSEGVETDIPSHPGNVTDNRGEVVDRGSEQGDQLTLSFQGQVYVFDSVLPEKVQAVLLLLGGRELPQAAPPGLGSPHQNNRVSSLPGTPQRFSIPQRLASLVRFREKRKGRNFDKKIRYTVRKEVALRMQRNKGQFTSAKSNNDEAASAGSSWGSNQTWAIESSEAQHQEISCRHCGIGEKSTPMMRRGPAGPRTLCNACGLMWANKGAFRDLSKASPQTAQNLPLNKNEDANLETDHQIMITVANDISNSQ.

The disordered stretch occupies residues 47–66 (NAGGMSEGVETDIPSHPGNV). A Tify domain is found at 77 to 112 (GSEQGDQLTLSFQGQVYVFDSVLPEKVQAVLLLLGG). Residues 119 to 141 (APPGLGSPHQNNRVSSLPGTPQR) form a disordered region. Residues 126 to 141 (PHQNNRVSSLPGTPQR) are compositionally biased toward polar residues. Residues 147 to 189 (RLASLVRFREKRKGRNFDKKIRYTVRKEVALRMQRNKGQFTSA) form the CCT domain. The GATA-type zinc-finger motif lies at 217–273 (QHQEISCRHCGIGEKSTPMMRRGPAGPRTLCNACGLMWANKGAFRDLSKASPQTAQN).

It belongs to the type IV zinc-finger family. Class C subfamily. As to expression, predominantly expressed in shoot apices, inflorescences and roots.

The protein localises to the nucleus. Functionally, transcriptional activator that specifically binds 5'-GATA-3' or 5'-GAT-3' motifs within gene promoters. This is GATA transcription factor 28 (GATA28) from Arabidopsis thaliana (Mouse-ear cress).